We begin with the raw amino-acid sequence, 209 residues long: Pyridoxine/pyridoxamine 5'-phosphate oxidase (209 aa).

Substrate is bound by residues 7-10 and K64; that span reads REDY. FMN is bound by residues 59 to 64, 74 to 75, R80, and K81; these read RIVLLK and FT. 3 residues coordinate substrate: Y121, R125, and S129. FMN-binding positions include 138–139 and W182; that span reads QS. 188–190 serves as a coordination point for substrate; it reads RLH. R192 is an FMN binding site.

This sequence belongs to the pyridoxamine 5'-phosphate oxidase family. In terms of assembly, homodimer. The cofactor is FMN.

It catalyses the reaction pyridoxamine 5'-phosphate + O2 + H2O = pyridoxal 5'-phosphate + H2O2 + NH4(+). It carries out the reaction pyridoxine 5'-phosphate + O2 = pyridoxal 5'-phosphate + H2O2. It participates in cofactor metabolism; pyridoxal 5'-phosphate salvage; pyridoxal 5'-phosphate from pyridoxamine 5'-phosphate: step 1/1. Its pathway is cofactor metabolism; pyridoxal 5'-phosphate salvage; pyridoxal 5'-phosphate from pyridoxine 5'-phosphate: step 1/1. Functionally, catalyzes the oxidation of either pyridoxine 5'-phosphate (PNP) or pyridoxamine 5'-phosphate (PMP) into pyridoxal 5'-phosphate (PLP). The chain is Pyridoxine/pyridoxamine 5'-phosphate oxidase from Actinobacillus pleuropneumoniae serotype 5b (strain L20).